A 361-amino-acid polypeptide reads, in one-letter code: MPRDGTNEQRFLELPSPMSFILNILRNVLEYFGVPVDQDLLICQNKNCGSARSIVRIIGRRLPLKPCRRPHFELIPHVNSTESDDYELRVPSFADVLCVANDEEASCLRFRHSLWQKKEERKIAPFYPSKLTWDPSSPGLRQNKTETDDLPVNEAAIKKIAALEDELTFLRSQIAAIVAMQDLRESRETGFIDLSDEQVPPSSATTGLSVEPDHAPSVVLPPPPPPPPPPQFSLQPPSSLPMQPGSANTHDIDSLATEMERQLSGVKKTDDSHHSKSQRLRDVPNMLDVLKDVNKVRLRPVERSPGGRPVQKRKRRSSEWDPVSLISNALKQKFAFQDDSFDRENSSWECSPFSSPETSRF.

Ser-137 is subject to Phosphoserine. Disordered regions lie at residues 191–286 (FIDL…VPNM) and 298–322 (LRPV…EWDP). The span at 219–231 (VLPPPPPPPPPPQ) shows a compositional bias: pro residues. Residues 232-244 (FSLQPPSSLPMQP) are compositionally biased toward low complexity. Residues 250-282 (HDIDSLATEMERQLSGVKKTDDSHHSKSQRLRD) are compositionally biased toward basic and acidic residues. Ser-304 and Ser-340 each carry phosphoserine.

This sequence belongs to the MTFR1 family. In terms of tissue distribution, expressed predominantly in testis (at protein level). Expressed to a lower extent in spleen.

The protein localises to the mitochondrion. In terms of biological role, may play a role in mitochondrial aerobic respiration essentially in the testis. Can also promote mitochondrial fission. This chain is Mitochondrial fission regulator 2 (Mtfr2), found in Mus musculus (Mouse).